Here is a 289-residue protein sequence, read N- to C-terminus: Rhodopsin (289 aa).

Topologically, residues Tyr-1–Gly-7 are extracellular. The chain crosses the membrane as a helical span at residues Tyr-8–Val-32. Topologically, residues Thr-33–Asn-44 are cytoplasmic. The helical transmembrane segment at Tyr-45–Tyr-67 threads the bilayer. The Extracellular segment spans residues Thr-68–Cys-81. A disulfide bridge links Cys-81 with Cys-158. A helical membrane pass occupies residues Asn-82–Ile-104. Positions Glu-105–Trp-107 match the 'Ionic lock' involved in activated form stabilization motif. At Glu-105–His-123 the chain is on the cytoplasmic side. Residues Ala-124–Val-144 traverse the membrane as a helical segment. The Extracellular segment spans residues Gly-145–Ser-173. N-linked (GlcNAc...) asparagine glycosylation is present at Asn-171. The chain crosses the membrane as a helical span at residues Phe-174 to Gly-195. Residues Arg-196–Arg-223 are Cytoplasmic-facing. The helical transmembrane segment at Met-224 to Trp-245 threads the bilayer. Residues Ile-246–Ile-257 lie on the Extracellular side of the membrane. The chain crosses the membrane as a helical span at residues Phe-258–Cys-279. The residue at position 267 (Lys-267) is an N6-(retinylidene)lysine. Residues Met-280 to Ile-289 lie on the Cytoplasmic side of the membrane.

It belongs to the G-protein coupled receptor 1 family. Opsin subfamily. In terms of processing, phosphorylated on some or all of the serine and threonine residues present in the C-terminal region. Contains one covalently linked retinal chromophore.

The protein resides in the membrane. It localises to the cell projection. Its subcellular location is the cilium. It is found in the photoreceptor outer segment. In terms of biological role, photoreceptor required for image-forming vision at low light intensity. While most salt water fish species use retinal as chromophore, most freshwater fish use 3-dehydroretinal, or a mixture of retinal and 3-dehydroretinal. Light-induced isomerization of 11-cis to all-trans retinal triggers a conformational change that activates signaling via G-proteins. Subsequent receptor phosphorylation mediates displacement of the bound G-protein alpha subunit by arrestin and terminates signaling. The polypeptide is Rhodopsin (rho) (Leocottus kesslerii (Kessler's sculpin)).